The sequence spans 224 residues: MWVPTLSSSSCSSDERDESSGEAALTPVYLNVYDLTPVNNYLYWFGIGIFHSGIEAHNLEYCYGAHEYPTSGVYEVEPRNCPGFIFRRSVLLGTTSMSRSDFRSYMEKLSRKYHGDTYHLIAKNCNHFTEEVCLQLTGKPIPGWINRLARVGSFCNCLLPESIQLTAVSALPERLEFSDEDESNSEASSVSDEEGSEQHLINVADREIVYLQNKPVRLTREEIP.

One can recognise a PPPDE domain in the interval threonine 26–isoleucine 163. Residues histidine 51 and cysteine 125 contribute to the active site. The segment at glutamate 176–isoleucine 201 is disordered.

The protein belongs to the DeSI family.

This Arabidopsis thaliana (Mouse-ear cress) protein is DeSI-like protein At4g17486.